Consider the following 556-residue polypeptide: Oxygen-dependent choline dehydrogenase (556 aa).

4 to 33 provides a ligand contact to FAD; the sequence is DYIIIGAGSAGNVLATRLTEDPNTSVLLLE. The active-site Proton acceptor is the histidine 473.

It belongs to the GMC oxidoreductase family. Requires FAD as cofactor.

The enzyme catalyses choline + A = betaine aldehyde + AH2. It carries out the reaction betaine aldehyde + NAD(+) + H2O = glycine betaine + NADH + 2 H(+). It functions in the pathway amine and polyamine biosynthesis; betaine biosynthesis via choline pathway; betaine aldehyde from choline (cytochrome c reductase route): step 1/1. Its function is as follows. Involved in the biosynthesis of the osmoprotectant glycine betaine. Catalyzes the oxidation of choline to betaine aldehyde and betaine aldehyde to glycine betaine at the same rate. In Shigella flexneri serotype 5b (strain 8401), this protein is Oxygen-dependent choline dehydrogenase.